A 406-amino-acid chain; its full sequence is Putative nickel insertion protein (406 aa).

This sequence belongs to the LarC family.

In Methanosphaera stadtmanae (strain ATCC 43021 / DSM 3091 / JCM 11832 / MCB-3), this protein is Putative nickel insertion protein.